The chain runs to 104 residues: Large ribosomal subunit protein bL21 (104 aa).

This sequence belongs to the bacterial ribosomal protein bL21 family. In terms of assembly, part of the 50S ribosomal subunit. Contacts protein L20.

Functionally, this protein binds to 23S rRNA in the presence of protein L20. The chain is Large ribosomal subunit protein bL21 from Streptococcus uberis (strain ATCC BAA-854 / 0140J).